The following is a 56-amino-acid chain: Large ribosomal subunit protein bL33 (56 aa).

Residues 1-12 (MASKGGRDKIKL) show a composition bias toward basic and acidic residues. Residues 1-28 (MASKGGRDKIKLESTAGTGHFYTTTKNK) form a disordered region. A compositionally biased stretch (polar residues) spans 15 to 25 (TAGTGHFYTTT).

It belongs to the bacterial ribosomal protein bL33 family.

This chain is Large ribosomal subunit protein bL33, found in Cupriavidus necator (strain ATCC 17699 / DSM 428 / KCTC 22496 / NCIMB 10442 / H16 / Stanier 337) (Ralstonia eutropha).